Here is a 425-residue protein sequence, read N- to C-terminus: Serine--tRNA ligase (425 aa).

Residues Asn-110–Pro-134 form a disordered region. Residues Pro-117 to Pro-134 are compositionally biased toward basic and acidic residues. Thr-233 to Glu-235 serves as a coordination point for L-serine. Arg-264–Glu-266 is a binding site for ATP. An L-serine-binding site is contributed by Glu-287. An ATP-binding site is contributed by Glu-351–Ser-354. Ser-385 provides a ligand contact to L-serine.

Belongs to the class-II aminoacyl-tRNA synthetase family. Type-1 seryl-tRNA synthetase subfamily. As to quaternary structure, homodimer. The tRNA molecule binds across the dimer.

The protein localises to the cytoplasm. The catalysed reaction is tRNA(Ser) + L-serine + ATP = L-seryl-tRNA(Ser) + AMP + diphosphate + H(+). It catalyses the reaction tRNA(Sec) + L-serine + ATP = L-seryl-tRNA(Sec) + AMP + diphosphate + H(+). Its pathway is aminoacyl-tRNA biosynthesis; selenocysteinyl-tRNA(Sec) biosynthesis; L-seryl-tRNA(Sec) from L-serine and tRNA(Sec): step 1/1. Catalyzes the attachment of serine to tRNA(Ser). Is also able to aminoacylate tRNA(Sec) with serine, to form the misacylated tRNA L-seryl-tRNA(Sec), which will be further converted into selenocysteinyl-tRNA(Sec). The sequence is that of Serine--tRNA ligase from Synechococcus sp. (strain RCC307).